Here is a 1242-residue protein sequence, read N- to C-terminus: Structural polyprotein (1242 aa).

The segment at 14–101 is disordered; sequence WRPRMPPRPW…PKRKPGRRER (88 aa). Over residues 26 to 42 the composition is skewed to low complexity; the sequence is RMPTMQRPDQQARQMQQ. The tract at residues 35-66 is host transcription inhibition; sequence QQARQMQQLIAAVSTLALRQNAAAPQRGKKKQ. Residues 59–96 carry the Nuclear localization signal motif; it reads PQRGKKKQPRRKKPKPQPEKPKKQEQKPKQKKAPKRKP. The segment covering 61-73 has biased composition (basic residues); that stretch reads RGKKKQPRRKKPK. Basic and acidic residues predominate over residues 74–86; it reads PQPEKPKKQEQKP. The segment at 82–111 is binding to the viral RNA; that stretch reads QEQKPKQKKAPKRKPGRRERMCMKIEHDCI. Residues 87-98 are compositionally biased toward basic residues; that stretch reads KQKKAPKRKPGR. Residues 96–110 form a ribosome-binding region; it reads PGRRERMCMKIEHDC. An intrachain disulfide couples Cys-110 to Cys-125. The 149-residue stretch at 110–258 folds into the Peptidase S3 domain; that stretch reads CIFEVKHEGK…KITPEGTVEW (149 aa). Catalysis depends on His-136, which acts as the Charge relay system. A Nuclear export signal motif is present at residues 141–151; sequence IDNADLARLSY. Positions 152–157 are interaction with spike glycoprotein E2; that stretch reads KKSSKY. The active-site Charge relay system is Asp-158. A dimerization of the capsid protein region spans residues 180–190; the sequence is PEGHYNWHYGA. The Charge relay system role is filled by Ser-210. Positions 216-220 are dimerization of the capsid protein; that stretch reads DNKGP. Positions 259-272 are functions as an uncleaved signal peptide for the precursor of protein E3/E2; it reads AASTVTAMCLLTNI. 8 disulfide bridges follow: Cys-267–Cys-276, Cys-281–Cys-285, Cys-284–Cys-316, Cys-343–Cys-449, Cys-346–Cys-352, Cys-415–Cys-429, Cys-477–Cys-589, and Cys-527–Cys-544. Asn-271 carries an N-linked (GlcNAc...) asparagine; by host glycan. Topologically, residues 325-690 are extracellular; it reads STANHFNAYK…YYYGLHPTTT (366 aa). 2 interaction with host Mxra8 receptor regions span residues 350–353 and 386–388; these read HSCH and HDH. Interaction with host Mxra8 receptor stretches follow at residues 508–511 and 540–546; these read QSGN and TINSCTV. Asn-586 carries an N-linked (GlcNAc...) asparagine; by host glycan. A helical membrane pass occupies residues 691–711; it reads IVVVIRVSVVVLLSFAASVYM. The Cytoplasmic portion of the chain corresponds to 712–746; that stretch reads CVVARTKCLTPYALTPGAVVPVTIGVLCCAPKAHA. The interaction with the capsid protein stretch occupies residues 714-718; the sequence is VARTK. 3 S-palmitoyl cysteine; by host lipidation sites follow: Cys-719, Cys-739, and Cys-740. The interval 719–739 is transient transmembrane before p62-6K protein processing; the sequence is CLTPYALTPGAVVPVTIGVLC. Residues Cys-719 and Cys-740 are joined by a disulfide bond. Residues 747–761 lie on the Extracellular side of the membrane; that stretch reads ASFAEGMAYLWDNNQ. Residue Asn-760 is glycosylated (N-linked (GlcNAc...) asparagine; by host). The helical transmembrane segment at 762 to 782 threads the bilayer; that stretch reads SMFWMELTGPLALLILATCCA. Over 783–785 the chain is Cytoplasmic; it reads RSL. A helical membrane pass occupies residues 786–806; the sequence is LSCCKGSFLVAMSIGSAVASA. The Extracellular segment spans residues 807–1217; that stretch reads YEHTAIIPNQ…STAMTWAQHL (411 aa). Disulfide bonds link Cys-855/Cys-920, Cys-868/Cys-900, Cys-869/Cys-902, and Cys-874/Cys-884. The interval 890 to 907 is E1 fusion peptide loop; it reads VYPFMWGGAYCFCDSENT. N-linked (GlcNAc...) asparagine; by host glycosylation is found at Asn-947 and Asn-1076. 4 disulfides stabilise this stretch: Cys-1065–Cys-1077, Cys-1107–Cys-1180, Cys-1112–Cys-1184, and Cys-1134–Cys-1174. A helical membrane pass occupies residues 1218–1238; that stretch reads AGGVGLLIALAVLILVIVTCV. The S-palmitoyl cysteine; by host moiety is linked to residue Cys-1237. The Cytoplasmic portion of the chain corresponds to 1239–1242; sequence TLRR.

As to quaternary structure, homodimer. Homomultimer. Interacts with host karyopherin KPNA4; this interaction allows the nuclear import of the viral capsid protein. Interacts with spike glycoprotein E2. Interacts with host IRAK1; the interaction leads to inhibition of IRAK1-dependent signaling. The precursor of protein E3/E2 and E1 form a heterodimer shortly after synthesis. In terms of assembly, the precursor of protein E3/E2 and E1 form a heterodimer shortly after synthesis. Processing of the precursor of protein E3/E2 into E2 and E3 results in a heterodimer of the spike glycoproteins E2 and E1. Spike at virion surface are constituted of a trimer of E2-E1 heterodimers. After target cell attachment and endocytosis, E1 change conformation to form homotrimers. Interacts with 6K protein. As to quaternary structure, interacts with spike glycoprotein E1. Processing of the precursor of protein E3/E2 into E2 and E3 results in a heterodimer of the spike glycoproteins E2 and E1. Spike at virion surface are constituted of a trimer of E2-E1 heterodimers. Interacts with 6K protein. Interacts with host MXRA8; this interaction mediates virus entry. Oligomer. Interacts with spike glycoprotein E1. Interacts with spike glycoprotein E2. Structural polyprotein: Specific enzymatic cleavages in vivo yield mature proteins. Capsid protein is auto-cleaved during polyprotein translation, unmasking a signal peptide at the N-terminus of the precursor of E3/E2. The remaining polyprotein is then targeted to the host endoplasmic reticulum, where host signal peptidase cleaves it into pE2, 6K and E1 proteins. pE2 is further processed to mature E3 and E2 by host furin in trans-Golgi vesicle. In terms of processing, palmitoylated via thioester bonds. These palmitoylations may induce disruption of the C-terminus transmembrane. This would result in the reorientation of E2 C-terminus from lumenal to cytoplasmic side. Post-translationally, N-glycosylated. Palmitoylated via thioester bonds.

Its subcellular location is the virion. It localises to the host cytoplasm. It is found in the host cell membrane. The protein resides in the host nucleus. The protein localises to the virion membrane. Its subcellular location is the host Golgi apparatus. It localises to the host trans-Golgi network. It is found in the host endoplasmic reticulum. The enzyme catalyses Autocatalytic release of the core protein from the N-terminus of the togavirus structural polyprotein by hydrolysis of a -Trp-|-Ser- bond.. Its function is as follows. Forms an icosahedral capsid with a T=4 symmetry composed of 240 copies of the capsid protein surrounded by a lipid membrane through which penetrate 80 spikes composed of trimers of E1-E2 heterodimers. The capsid protein binds to the viral RNA genome at a site adjacent to a ribosome binding site for viral genome translation following genome release. Possesses a protease activity that results in its autocatalytic cleavage from the nascent structural protein. Following its self-cleavage, the capsid protein transiently associates with ribosomes, and within several minutes the protein binds to viral RNA and rapidly assembles into icosahedric core particles. The resulting nucleocapsid eventually associates with the cytoplasmic domain of the spike glycoprotein E2 at the cell membrane, leading to budding and formation of mature virions. In case of infection, new virions attach to target cells and after clathrin-mediated endocytosis their membrane fuses with the host endosomal membrane. This leads to the release of the nucleocapsid into the cytoplasm, followed by an uncoating event necessary for the genomic RNA to become accessible. The uncoating might be triggered by the interaction of capsid proteins with ribosomes. Binding of ribosomes would release the genomic RNA since the same region is genomic RNA-binding and ribosome-binding. Specifically inhibits interleukin-1 receptor-associated kinase 1/IRAK1-dependent signaling during viral entry, representing a means by which the alphaviruses may evade innate immune detection and activation prior to viral gene expression. Functionally, provides the signal sequence for the translocation of the precursor of protein E3/E2 to the host endoplasmic reticulum. Furin-cleaved E3 remains associated with spike glycoprotein E1 and mediates pH protection of the latter during the transport via the secretory pathway. After virion release from the host cell, the assembly protein E3 is gradually released in the extracellular space. In terms of biological role, plays a role in viral attachment to target host cell, by binding to the cell receptor MXRA8. Synthesized as a p62 precursor which is processed by furin at the cell membrane just before virion budding, giving rise to E2-E1 heterodimer. The p62-E1 heterodimer is stable, whereas E2-E1 is unstable and dissociate at low pH. p62 is processed at the last step, presumably to avoid E1 fusion activation before its final export to cell surface. E2 C-terminus contains a transitory transmembrane that would be disrupted by palmitoylation, resulting in reorientation of the C-terminal tail from lumenal to cytoplasmic side. This step is critical since E2 C-terminus is involved in budding by interacting with capsid proteins. This release of E2 C-terminus in cytoplasm occurs lately in protein export, and precludes premature assembly of particles at the endoplasmic reticulum membrane. Acts as a viroporin that participates in virus glycoprotein processing and transport to the plasma membrane, cell permeabilization and budding of viral particles. Disrupts the calcium homeostasis of the cell, probably at the endoplasmic reticulum level. This leads to cytoplasmic calcium elevation. Because of its lipophilic properties, the 6K protein is postulated to influence the selection of lipids that interact with the transmembrane domains of the glycoproteins, which, in turn, affects the deformability of the bilayer required for the extreme curvature that occurs as budding proceeds. Present in low amount in virions, about 3% compared to viral glycoproteins. Its function is as follows. Class II viral fusion protein. Fusion activity is inactive as long as E1 is bound to E2 in mature virion. After virus attachment to target cell via host MXRA8 and endocytosis, acidification of the endosome induce dissociation of E1/E2 heterodimer and concomitant trimerization of the E1 subunits. This E1 trimer is fusion active, and promotes release of viral nucleocapsid in cytoplasm after endosome and viral membrane fusion. Efficient fusion requires the presence of cholesterol and sphingolipid in the target membrane. The polypeptide is Structural polyprotein (Mayaro virus (strain Brazil) (MAYV)).